The chain runs to 89 residues: uncharacterized protein (89 aa).

This is an uncharacterized protein from Sinorhizobium fredii (strain NBRC 101917 / NGR234).